The chain runs to 300 residues: NADH-cytochrome b5 reductase 2 (300 aa).

The helical transmembrane segment at phenylalanine 12–tyrosine 29 threads the bilayer. In terms of domain architecture, FAD-binding FR-type spans aspartate 49–glutamate 153. An FAD-binding site is contributed by glutamine 156–leucine 191.

The protein belongs to the flavoprotein pyridine nucleotide cytochrome reductase family. FAD is required as a cofactor.

It is found in the mitochondrion outer membrane. It catalyses the reaction 2 Fe(III)-[cytochrome b5] + NADH = 2 Fe(II)-[cytochrome b5] + NAD(+) + H(+). May mediate the reduction of outer membrane cytochrome b5. This is NADH-cytochrome b5 reductase 2 (MCR1) from Lodderomyces elongisporus (strain ATCC 11503 / CBS 2605 / JCM 1781 / NBRC 1676 / NRRL YB-4239) (Yeast).